We begin with the raw amino-acid sequence, 374 residues long: Probable neutral protease 2 homolog ARB_00849 (374 aa).

The signal sequence occupies residues 1–19; it reads MKFLTALSAIGALVATATA. Positions 20–189 are excised as a propeptide; it reads AAVPNTPAKQ…KKSRGTIDKR (170 aa). Intrachain disulfides connect C197–C268 and C275–C293. A Zn(2+)-binding site is contributed by H318. Residue E319 is part of the active site. Residues H322 and D333 each coordinate Zn(2+).

It belongs to the peptidase M35 family. Zn(2+) is required as a cofactor.

It localises to the secreted. It carries out the reaction Preferential cleavage of bonds with hydrophobic residues in P1'. Also 3-Asn-|-Gln-4 and 8-Gly-|-Ser-9 bonds in insulin B chain.. Probable secreted metalloprotease that shows high activities on basic nuclear substrates such as histone and protamine. May be involved in virulence. This Arthroderma benhamiae (strain ATCC MYA-4681 / CBS 112371) (Trichophyton mentagrophytes) protein is Probable neutral protease 2 homolog ARB_00849.